The chain runs to 162 residues: Interleukin-15 (162 aa).

The N-terminal stretch at 1–29 is a signal peptide; it reads MRISKPHLRSISIQCYLCLLLKSHFLTEA. Residues 30 to 48 constitute a propeptide that is removed on maturation; sequence GIHVFILGCFSAGLPKTEA. 2 disulfides stabilise this stretch: cysteine 83/cysteine 133 and cysteine 90/cysteine 136. Asparagine 127 carries an N-linked (GlcNAc...) asparagine glycan.

Belongs to the IL-15/IL-21 family.

It is found in the secreted. Its function is as follows. Cytokine that plays a major role in the development of inflammatory and protective immune responses to microbial invaders and parasites by modulating immune cells of both the innate and adaptive immune systems. Stimulates the proliferation of natural killer cells, T-cells and B-cells and promotes the secretion of several cytokines. In monocytes, induces the production of IL8 and monocyte chemotactic protein 1/CCL2, two chemokines that attract neutrophils and monocytes respectively to sites of infection. Unlike most cytokines, which are secreted in soluble form, IL15 is expressed in association with its high affinity IL15RA on the surface of IL15-producing cells and delivers signals to target cells that express IL2RB and IL2RG receptor subunits. Binding to its receptor triggers the phosphorylation of JAK1 and JAK3 and the recruitment and subsequent phosphorylation of signal transducer and activator of transcription-3/STAT3 and STAT5. In mast cells, induces the rapid tyrosine phosphorylation of STAT6 and thereby controls mast cell survival and release of cytokines such as IL4. The protein is Interleukin-15 (IL15) of Chlorocebus aethiops (Green monkey).